A 969-amino-acid chain; its full sequence is Bifunctional glutamine synthetase adenylyltransferase/adenylyl-removing enzyme (969 aa).

The tract at residues 1-456 (MNWQANIHKL…HFEQLFAAPH (456 aa)) is adenylyl removase. An adenylyl transferase region spans residues 466-969 (EKRLAEVWLG…SALLEDESAK (504 aa)).

The protein belongs to the GlnE family. Requires Mg(2+) as cofactor.

It catalyses the reaction [glutamine synthetase]-O(4)-(5'-adenylyl)-L-tyrosine + phosphate = [glutamine synthetase]-L-tyrosine + ADP. It carries out the reaction [glutamine synthetase]-L-tyrosine + ATP = [glutamine synthetase]-O(4)-(5'-adenylyl)-L-tyrosine + diphosphate. Involved in the regulation of glutamine synthetase GlnA, a key enzyme in the process to assimilate ammonia. When cellular nitrogen levels are high, the C-terminal adenylyl transferase (AT) inactivates GlnA by covalent transfer of an adenylyl group from ATP to specific tyrosine residue of GlnA, thus reducing its activity. Conversely, when nitrogen levels are low, the N-terminal adenylyl removase (AR) activates GlnA by removing the adenylyl group by phosphorolysis, increasing its activity. The regulatory region of GlnE binds the signal transduction protein PII (GlnB) which indicates the nitrogen status of the cell. In Nitrosococcus oceani (strain ATCC 19707 / BCRC 17464 / JCM 30415 / NCIMB 11848 / C-107), this protein is Bifunctional glutamine synthetase adenylyltransferase/adenylyl-removing enzyme.